Consider the following 192-residue polypeptide: Phosphomevalonate kinase (192 aa).

Residues 17-23 (KRKSGKD) and Arg-141 each bind ATP. Position 170 (Asn-170) interacts with substrate. ATP contacts are provided by His-171, Arg-176, and Gln-180.

In terms of assembly, monomer. As to expression, heart, liver, skeletal muscle, kidney, and pancreas. Lower level in brain, placenta and lung.

It is found in the cytoplasm. It localises to the cytosol. The catalysed reaction is (R)-5-phosphomevalonate + ATP = (R)-5-diphosphomevalonate + ADP. Its pathway is isoprenoid biosynthesis; isopentenyl diphosphate biosynthesis via mevalonate pathway; isopentenyl diphosphate from (R)-mevalonate: step 2/3. Catalyzes the reversible ATP-dependent phosphorylation of mevalonate 5-phosphate to produce mevalonate diphosphate and ADP, a key step in the mevalonic acid mediated biosynthesis of isopentenyl diphosphate and other polyisoprenoid metabolites. In Homo sapiens (Human), this protein is Phosphomevalonate kinase (PMVK).